A 178-amino-acid polypeptide reads, in one-letter code: ATP synthase subunit delta (178 aa).

It belongs to the ATPase delta chain family. F-type ATPases have 2 components, F(1) - the catalytic core - and F(0) - the membrane proton channel. F(1) has five subunits: alpha(3), beta(3), gamma(1), delta(1), epsilon(1). F(0) has three main subunits: a(1), b(2) and c(10-14). The alpha and beta chains form an alternating ring which encloses part of the gamma chain. F(1) is attached to F(0) by a central stalk formed by the gamma and epsilon chains, while a peripheral stalk is formed by the delta and b chains.

The protein resides in the cell inner membrane. F(1)F(0) ATP synthase produces ATP from ADP in the presence of a proton or sodium gradient. F-type ATPases consist of two structural domains, F(1) containing the extramembraneous catalytic core and F(0) containing the membrane proton channel, linked together by a central stalk and a peripheral stalk. During catalysis, ATP synthesis in the catalytic domain of F(1) is coupled via a rotary mechanism of the central stalk subunits to proton translocation. Its function is as follows. This protein is part of the stalk that links CF(0) to CF(1). It either transmits conformational changes from CF(0) to CF(1) or is implicated in proton conduction. This is ATP synthase subunit delta from Stutzerimonas stutzeri (strain A1501) (Pseudomonas stutzeri).